We begin with the raw amino-acid sequence, 108 residues long: Ig light chain C region (108 aa).

One can recognise an Ig-like domain in the interval 7 to 102; it reads PTVSIYCPSL…LTPALAKSFQ (96 aa). 2 disulfide bridges follow: cysteine 13-cysteine 106 and cysteine 28-cysteine 86.

The chain is Ig light chain C region from Aquarana catesbeiana (American bullfrog).